Reading from the N-terminus, the 385-residue chain is Trans-enoyl reductase poxH (385 aa).

Residue 64 to 67 (QPYS) coordinates NADP(+). 156 to 163 (PDPAAPPI) lines the substrate pocket. Residues 199–202 (STSV), 223–226 (SGTD), Tyr241, and 289–290 (LG) each bind NADP(+). Substrate is bound at residue 309–313 (HMAPL). Residue 372–373 (KR) coordinates NADP(+).

This sequence belongs to the zinc-containing alcohol dehydrogenase family. Monomer.

The protein operates within secondary metabolite biosynthesis. Trans-enoyl reductase; part of the gene cluster that mediates the biosynthesis of oxaleimides, cytotoxic compounds containing an unusual disubstituted succinimide moiety. The first step of the pathway is provided by the HR-PKS poxF that serves in a new mode of collaborative biosynthesis with the PKS-NRPS poxE, by providing the olefin containing amino acid substrate via the synthesis of an ACP-bound dec-4-enoate. The cytochrome P450 monooxygenase poxM-catalyzed oxidation at the alpha-position creates the enzyme-bound 2-hydroxydec-4-enoyl-ACP thioester, which may be prone to spontaneous hydrolysis to yield 2-hydroxydec-4-enoic acid due to increased electrophilicity of the carbonyl. 2-hydroxydec-4-enoic acid can then be further oxidized by poxM to yield the alpha-ketoacid 2-oxodec-4-enoicacid, which is reductively aminated by the aminotransferase poxL to yield (S,E)-2-aminodec-4-enoic acid. The Hybrid PKS-NRPS synthetase poxE then performs condensation between the octaketide product of its PKS modules and the amino group of (S,E)-2-aminodec-4-enoic acid which is activated and incorporated by the adenylation domain. The resulting aminoacyl product can be cyclized by the Diels-Alderase PoxQ and reductively released by the reductive (R) domain of poxE to yield an aldehyde intermediate. The released aldehyde is then substrate for a Knoevenagel condensation by the hydrolyase poxO followed by an oxidation at the 5-position of the pyrrolidone ring. The presence of the olefin from the amino acid building block allows for migration of the substituted allyl group to occur. This allylic transposition reaction takes place in a conjugate addition, semipinacol-like fashion to yield a succinimide intermediate. Iterative two-electron oxidations of the C7 methyl of the succinimide intermediate to the carboxylic acid can be catalyzed by one of two remaining cytochrome P450 monooxygenasess poxC or poxD to yield oxaleimide A. Subsequent oxidation yields the maleimide scaffold oxaleimide I. Both oxaleimide A and oxaleimide I can undergo oxidative modifications in the decalin ring to yield the series of products oxaleimides B to H. This is Trans-enoyl reductase poxH from Penicillium oxalicum.